The chain runs to 27 residues: Phospholipase A2 P-elapitoxin-Aa1a alpha chain (27 aa).

This sequence belongs to the phospholipase A2 family. Group I subfamily. Heterotrimer of alpha, beta and gamma chains, each related to PLA2. Ca(2+) serves as cofactor. As to expression, expressed by the venom gland.

It is found in the secreted. The enzyme catalyses a 1,2-diacyl-sn-glycero-3-phosphocholine + H2O = a 1-acyl-sn-glycero-3-phosphocholine + a fatty acid + H(+). Heterotrimer: presynaptic neurotoxin. Inhibits nerve-evoked twitch contractions but not responses to cholinergic agonists acetylcholine and carbachol and to depolarizing agonist KCl. Causes a fade in tetanic contractions. Displays a triphasic mode of action with depression, enhancement and blockade of neurotransmission. Does not display myotoxic activity such as changes in baseline muscle tension or inhibition of directly stimulated muscle twitches. All subunits are necessary for maximum toxicity. In terms of biological role, monomer: Snake venom phospholipase A2 (PLA2) alpha chain that has enzymatic activity. PLA2 catalyzes the calcium-dependent hydrolysis of the 2-acyl groups in 3-sn-phosphoglycerides. This chain is Phospholipase A2 P-elapitoxin-Aa1a alpha chain, found in Acanthophis antarcticus (Common death adder).